The primary structure comprises 1654 residues: Microtubule cross-linking factor 2 (1654 aa).

The segment at 1 to 188 (METPAGESSA…VAASSVGSSR (188 aa)) is disordered. Low complexity predominate over residues 55 to 66 (GSATACGTASSA). Pro residues predominate over residues 102 to 113 (GTGPRPPPPPPS). The segment covering 132–147 (LGLELALSSDAESAAG) has biased composition (low complexity). The segment at 209-238 (PGGLVRELEELRSENDYLKDEIEELRAEML) is required for association with Golgi apparatus membrane. 5 coiled-coil regions span residues 216–279 (LEEL…AERR), 308–349 (SMRL…LQTE), 448–546 (LKLV…YRSE), 816–843 (IKDLQLVLAEAHDSLRGLQEQLSQERQL), and 1079–1113 (SQEKLQLVERLQGEKQQVEQQVKELQNRLSQLQKA). The segment at 348-379 (TELDRPREHSLKKRGTRSLGKTDKKPTAQEDS) is disordered. Residues 1122–1145 (SDMEKQDNSWKEARSEKTHDKEGV) show a composition bias toward basic and acidic residues. The disordered stretch occupies residues 1122 to 1146 (SDMEKQDNSWKEARSEKTHDKEGVS). A phosphoserine mark is found at serine 1165 and serine 1251. The segment at 1406–1505 (LVSVRSKQIS…HSGSTESVWK (100 aa)) is KR-rich domain required for microtubules binding. Disordered stretches follow at residues 1427–1450 (RPCCSPKYGSPKLQRRSVSKLDST), 1537–1560 (PTTAAGEESCKKPEPLSPASYHQP), and 1627–1654 (NTIRHSPSKCRLHPSESGWGGEERAAPQ). The segment covering 1628-1638 (TIRHSPSKCRL) has biased composition (basic residues).

The protein belongs to the MTCL family. In terms of assembly, interacts with CLASP2. Interacts with CLASP1. The C-terminal SOGA 25 kDa form occurs as a monomer. Proteolytically cleaved into a C-terminal SOGA 25 kDa form that is detected in plasma. Proteolytically cleaved in primary hepatocytes into a C-terminal SOGA 80 kDa form. In terms of processing, phosphorylated during mitosis in a CDK1-dependent manner. As to expression, expressed in liver (at protein level).

The protein localises to the secreted. The protein resides in the cytoplasm. It localises to the cytoskeleton. Its subcellular location is the golgi apparatus membrane. It is found in the midbody. Microtubule-associated factor that enables integration of the centrosomal and Golgi-associated microtubules on the Golgi membrane, supporting directional migration. Preferentially acts on the perinuclear microtubules accumulated around the Golgi. Associates with the Golgi membrane through the N-terminal coiled-coil region and directly binds microtubules through the C-terminal domain. Required for faithful chromosome segregation during mitosis. Regulates autophagy by playing a role in the reduction of glucose production in an adiponectin- and insulin-dependent manner. This chain is Microtubule cross-linking factor 2 (Mtcl2), found in Mus musculus (Mouse).